Reading from the N-terminus, the 376-residue chain is CCA-adding enzyme (376 aa).

2 residues coordinate ATP: Gly-23 and Arg-26. 2 residues coordinate CTP: Gly-23 and Arg-26. Mg(2+) is bound by residues Glu-36 and Asp-38. ATP contacts are provided by Arg-106, Arg-152, and Arg-155. Residues Arg-106, Arg-152, and Arg-155 each coordinate CTP.

This sequence belongs to the tRNA nucleotidyltransferase/poly(A) polymerase family. Bacterial CCA-adding enzyme type 2 subfamily. Mg(2+) serves as cofactor.

The catalysed reaction is a tRNA precursor + 2 CTP + ATP = a tRNA with a 3' CCA end + 3 diphosphate. It carries out the reaction a tRNA with a 3' CCA end + 2 CTP + ATP = a tRNA with a 3' CCACCA end + 3 diphosphate. Its function is as follows. Catalyzes the addition and repair of the essential 3'-terminal CCA sequence in tRNAs without using a nucleic acid template. Adds these three nucleotides in the order of C, C, and A to the tRNA nucleotide-73, using CTP and ATP as substrates and producing inorganic pyrophosphate. tRNA 3'-terminal CCA addition is required both for tRNA processing and repair. Also involved in tRNA surveillance by mediating tandem CCA addition to generate a CCACCA at the 3' terminus of unstable tRNAs. While stable tRNAs receive only 3'-terminal CCA, unstable tRNAs are marked with CCACCA and rapidly degraded. The polypeptide is CCA-adding enzyme (Coxiella burnetii (strain RSA 331 / Henzerling II)).